Reading from the N-terminus, the 630-residue chain is Protein phosphatase 2C-like domain-containing protein 1 (630 aa).

A PPM-type phosphatase domain is found at 170–621 (GVGICEDRNS…DNITVMVIFL (452 aa)). Residues 557-569 (TTHRKPCSEKVTD) show a composition bias toward basic and acidic residues. A disordered region spans residues 557–578 (TTHRKPCSEKVTDRPTSVNDVA).

The protein belongs to the PP2C family.

The sequence is that of Protein phosphatase 2C-like domain-containing protein 1 (PP2D1) from Homo sapiens (Human).